Consider the following 149-residue polypeptide: DnaJ homolog subfamily C member 24 (149 aa).

A J domain is found at 11–82 (DWYSILGADP…ETKREYDLQR (72 aa)). The 56-residue stretch at 93 to 148 (VDAQVYLEEMSWNEGDHSFYLSCRCGGKYSVSKDEAEEVSLISCDTCSLIIELLHY) folds into the DPH-type MB domain. Positions 115, 117, 136, and 139 each coordinate Zn(2+).

Belongs to the DPH4 family. As to quaternary structure, monomer and homooligomer. Iron binding promotes oligomerization.

It is found in the cytoplasm. The protein resides in the cytoskeleton. The protein operates within protein modification; peptidyl-diphthamide biosynthesis. In terms of biological role, stimulates the ATPase activity of several Hsp70-type chaperones. This ability is enhanced by iron-binding. The iron-bound form is redox-active and can function as electron carrier. Plays a role in the diphthamide biosynthesis, a post-translational modification of histidine which occurs in translation elongation factor 2 (EEF2) which can be ADP-ribosylated by diphtheria toxin and by Pseudomonas exotoxin A (Eta). The sequence is that of DnaJ homolog subfamily C member 24 from Homo sapiens (Human).